Here is a 59-residue protein sequence, read N- to C-terminus: Dendroaspin (59 aa).

Intrachain disulfides connect Cys3/Cys22, Cys17/Cys37, Cys39/Cys51, and Cys52/Cys57. Residues 43–45 (RGD) carry the Cell attachment site motif.

The protein belongs to the three-finger toxin family. Short-chain subfamily. Antiplatelet toxin sub-subfamily. In terms of tissue distribution, expressed by the venom gland.

It is found in the secreted. In terms of biological role, inhibits ADP-induced platelet aggregation and inhibits the binding of purified platelet fibrinogen receptor alpha-IIb/beta-3 (ITGA2B/ITGB3) to immobilized fibrinogen. Has also been described to inhibit cell adhesion to fibrinogen, fibronectin, laminin and collagen. The sequence is that of Dendroaspin from Dendroaspis jamesoni kaimosae (Eastern Jameson's mamba).